Reading from the N-terminus, the 394-residue chain is Maltose permease (394 aa).

The Cytoplasmic segment spans residues 1 to 11; the sequence is MGAAFKWGAAA. Residues 12-38 form a helical membrane-spanning segment; that stretch reads RKTVFPLFYFLIFFAFGALFPLLSVYL. Topologically, residues 39 to 45 are extracellular; that stretch reads QEEARLS. Residues 46–74 traverse the membrane as a helical segment; sequence GAAIGWIMSLPPIVTMAAQPLWGTAADYT. The Cytoplasmic portion of the chain corresponds to 75 to 78; sequence RKPV. The helical transmembrane segment at 79 to 104 threads the bilayer; it reads GLLLAALVLAALFGVMYALAGSYRLF. Residues 105 to 108 are Extracellular-facing; the sequence is VVLT. The helical transmembrane segment at 109 to 126 threads the bilayer; it reads VLLSAMQSAIVPLSDSLA. The Cytoplasmic portion of the chain corresponds to 127-137; the sequence is LRHVHEQGGNY. The helical transmembrane segment at 138 to 160 threads the bilayer; it reads GAIRLWGSLGFAMAVLAVGWLSD. The Extracellular portion of the chain corresponds to 161–163; it reads HIA. Residues 164–183 form a helical membrane-spanning segment; the sequence is FAVIFYAFSLALLTAAALAT. Residues 184–213 lie on the Cytoplasmic side of the membrane; that stretch reads RLPRYPMGAPGALTRQDVRGLLASRPFRLL. A helical transmembrane segment spans residues 214–233; the sequence is LVATFLLFGPILANNSYFGL. The Extracellular portion of the chain corresponds to 234 to 237; sequence LIHE. The chain crosses the membrane as a helical span at residues 238–262; that stretch reads LGGTLTGIGLAFLFAAGSEAPFMKA. The Cytoplasmic segment spans residues 263–272; that stretch reads ADRLIGRFGM. A helical transmembrane segment spans residues 273–292; the sequence is VRLLLLAALISAARWLAYAA. Over 293 to 295 the chain is Extracellular; it reads DPP. The chain crosses the membrane as a helical span at residues 296–318; it reads LWFVYMTTVVQGCSVGLAIPTAL. The Cytoplasmic segment spans residues 319–330; it reads QYARRLAPERVQ. A helical membrane pass occupies residues 331 to 358; sequence STAVALYSAVGNGLGAWFCTLVGGYLLE. The Extracellular segment spans residues 359–361; sequence RWQ. The chain crosses the membrane as a helical span at residues 362–382; that stretch reads IGAVYLFFSICTIVGVLVLLL. The Cytoplasmic portion of the chain corresponds to 383-394; sequence LAKRERTAGEEK.

This sequence belongs to the major facilitator superfamily.

The protein resides in the cell membrane. Functionally, high affinity transport of maltose. The protein is Maltose permease (malA) of Geobacillus stearothermophilus (Bacillus stearothermophilus).